We begin with the raw amino-acid sequence, 301 residues long: NADH-cytochrome b5 reductase 3 (301 aa).

A lipid anchor (N-myristoyl glycine) is attached at Gly2. The 113-residue stretch at 40-152 (DIKYPLRLID…RGPNGLLVYQ (113 aa)) folds into the FAD-binding FR-type domain. At Lys42 the chain carries N6-acetyllysine. A Phosphotyrosine modification is found at Tyr43. An N6-acetyllysine modification is found at Lys50. Arg92, Pro93, Tyr94, Val109, Lys111, and Phe114 together coordinate FAD. At Lys120 the chain carries N6-acetyllysine. Positions 126, 127, 128, and 185 each coordinate FAD.

It belongs to the flavoprotein pyridine nucleotide cytochrome reductase family. As to quaternary structure, component of a complex composed of cytochrome b5, NADH-cytochrome b5 reductase (CYB5R3) and MTARC2. Interacts with MTLN; the interaction is required to maintain cellular lipid composition and leads to stimulation of mitochondrial respiratory complex I activity. Requires FAD as cofactor.

Its subcellular location is the endoplasmic reticulum membrane. The protein localises to the mitochondrion outer membrane. The catalysed reaction is 2 Fe(III)-[cytochrome b5] + NADH = 2 Fe(II)-[cytochrome b5] + NAD(+) + H(+). Catalyzes the reduction of two molecules of cytochrome b5 using NADH as the electron donor. The polypeptide is NADH-cytochrome b5 reductase 3 (Mus musculus (Mouse)).